We begin with the raw amino-acid sequence, 689 residues long: uncharacterized protein (689 aa).

Composition is skewed to low complexity over residues 347–359 and 370–388; these read RPPS…AGEP and ASTA…TRPT. The segment at 347–689 is disordered; that stretch reads RPPSGSGEAA…KSQPPAAHTA (343 aa). Residues 405-480 are compositionally biased toward basic and acidic residues; the sequence is ARPESEEQTD…QESQVARRDE (76 aa). 2 stretches are compositionally biased toward pro residues: residues 515-539 and 550-569; these read VPGP…PPMT and RCPP…PPRP. Composition is skewed to low complexity over residues 570-581 and 591-610; these read SSDTPLSAVSRP and TARV…YSPA. Residues 611 to 620 show a composition bias toward pro residues; it reads PLSPPSPVSP. The span at 666–676 shows a compositional bias: low complexity; it reads SVPSSASPSAS.

This is an uncharacterized protein from Homo sapiens (Human).